Here is a 126-residue protein sequence, read N- to C-terminus: Holo-[acyl-carrier-protein] synthase (126 aa).

Residues D9 and E58 each contribute to the Mg(2+) site.

This sequence belongs to the P-Pant transferase superfamily. AcpS family. As to quaternary structure, homodimer. It depends on Mg(2+) as a cofactor.

It localises to the cytoplasm. The enzyme catalyses apo-[ACP] + CoA = holo-[ACP] + adenosine 3',5'-bisphosphate + H(+). Its function is as follows. Transfers the 4'-phosphopantetheine moiety from coenzyme A to the 'Ser-36' of acyl-carrier-protein. This Escherichia coli O157:H7 protein is Holo-[acyl-carrier-protein] synthase.